The following is a 460-amino-acid chain: Serine hydroxymethyltransferase, cytosolic (460 aa).

The residue at position 244 (K244) is an N6-(pyridoxal phosphate)lysine.

It belongs to the SHMT family. Homotetramer. The cofactor is pyridoxal 5'-phosphate.

It is found in the cytoplasm. It carries out the reaction (6R)-5,10-methylene-5,6,7,8-tetrahydrofolate + glycine + H2O = (6S)-5,6,7,8-tetrahydrofolate + L-serine. It functions in the pathway one-carbon metabolism; tetrahydrofolate interconversion. Interconversion of serine and glycine. This Encephalitozoon cuniculi (strain GB-M1) (Microsporidian parasite) protein is Serine hydroxymethyltransferase, cytosolic (SHMT-1).